The primary structure comprises 209 residues: Small ribosomal subunit protein uS3 (209 aa).

The 70-residue stretch at 38–107 (IRKFIKNKYY…RVVINIEEIK (70 aa)) folds into the KH type-2 domain.

Belongs to the universal ribosomal protein uS3 family. Part of the 30S ribosomal subunit. Forms a tight complex with proteins S10 and S14.

Its function is as follows. Binds the lower part of the 30S subunit head. Binds mRNA in the 70S ribosome, positioning it for translation. This Thermotoga sp. (strain RQ2) protein is Small ribosomal subunit protein uS3.